Consider the following 148-residue polypeptide: MDVLEIMKIIPHRYPLLLVDKILEMELGKRIVGLKNVSVNEPFFQGHFPGYPLMPGVLMLEAMAQVGGILMIKSLGLEIGKYAVVFAGIDEARFKRPVYPGDQLIMELETISLKKTISKMKGTATVNNQVVAEAILMAAARELESIKK.

The active site involves H47.

The protein belongs to the thioester dehydratase family. FabZ subfamily.

It is found in the cytoplasm. It carries out the reaction a (3R)-hydroxyacyl-[ACP] = a (2E)-enoyl-[ACP] + H2O. Functionally, involved in unsaturated fatty acids biosynthesis. Catalyzes the dehydration of short chain beta-hydroxyacyl-ACPs and long chain saturated and unsaturated beta-hydroxyacyl-ACPs. The protein is 3-hydroxyacyl-[acyl-carrier-protein] dehydratase FabZ of Hydrogenobaculum sp. (strain Y04AAS1).